An 822-amino-acid polypeptide reads, in one-letter code: Dextranase (822 aa).

A signal peptide spans 1-38 (MTVNLTLQHASEIIGQDNVDLTLAAGASAKVSNLTVAS). 2 disordered regions span residues 607-669 (EPVT…VDEL) and 683-788 (ETAH…ETTS). Residues 619–636 (NTVTSEASSETAKSENTT) are compositionally biased toward low complexity. Over residues 693-705 (SVSNTDQGTVASD) the composition is skewed to polar residues. Low complexity predominate over residues 706–761 (SITTPASEAASTAASTVSSEVSESVTVSSEPSETENSSEASTSESATPTTTAISES). Residues 771–788 (LTESESQASTSLVSETTS) are compositionally biased toward polar residues.

This sequence belongs to the glycosyl hydrolase 66 family.

The enzyme catalyses Endohydrolysis of (1-&gt;6)-alpha-D-glucosidic linkages in dextran.. The polypeptide is Dextranase (dex) (Streptococcus salivarius).